A 791-amino-acid polypeptide reads, in one-letter code: Phenylalanine--tRNA ligase beta subunit (791 aa).

A tRNA-binding domain is found at 39–147 (GDALGQVVVA…DDAPVGQALA (109 aa)). One can recognise a B5 domain in the interval 400-475 (PQPASILLRR…RIHGYDRVPT (76 aa)). Mg(2+)-binding residues include D453, D459, E462, and E463. The 94-residue stretch at 697-790 (SRYPSMRRDL…IEREHRARIR (94 aa)) folds into the FDX-ACB domain.

This sequence belongs to the phenylalanyl-tRNA synthetase beta subunit family. Type 1 subfamily. In terms of assembly, tetramer of two alpha and two beta subunits. It depends on Mg(2+) as a cofactor.

It is found in the cytoplasm. The catalysed reaction is tRNA(Phe) + L-phenylalanine + ATP = L-phenylalanyl-tRNA(Phe) + AMP + diphosphate + H(+). The chain is Phenylalanine--tRNA ligase beta subunit from Xanthomonas campestris pv. campestris (strain 8004).